A 233-amino-acid polypeptide reads, in one-letter code: DnaA regulatory inactivator Hda (233 aa).

It belongs to the DnaA family. HdA subfamily. The active form seems to be an ADP-bound monomer. Forms the RIDA complex (regulatory inactivation of DnaA) of ATP-DnaA, ADP-Hda and the DNA-loaded beta sliding clamp (dnaN).

Its function is as follows. Mediates the interaction of DNA replication initiator protein DnaA with DNA polymerase subunit beta sliding clamp (dnaN). Stimulates hydrolysis of ATP-DnaA to ADP-DnaA, rendering DnaA inactive for reinitiation, a process called regulatory inhibition of DnaA or RIDA. In Escherichia fergusonii (strain ATCC 35469 / DSM 13698 / CCUG 18766 / IAM 14443 / JCM 21226 / LMG 7866 / NBRC 102419 / NCTC 12128 / CDC 0568-73), this protein is DnaA regulatory inactivator Hda.